We begin with the raw amino-acid sequence, 293 residues long: tRNA-cytidine(32) 2-sulfurtransferase (293 aa).

Positions 71-76 match the PP-loop motif motif; the sequence is SGGKDS. Residues Cys146, Cys149, and Cys237 each coordinate [4Fe-4S] cluster.

It belongs to the TtcA family. In terms of assembly, homodimer. The cofactor is Mg(2+). It depends on [4Fe-4S] cluster as a cofactor.

It localises to the cytoplasm. It catalyses the reaction cytidine(32) in tRNA + S-sulfanyl-L-cysteinyl-[cysteine desulfurase] + AH2 + ATP = 2-thiocytidine(32) in tRNA + L-cysteinyl-[cysteine desulfurase] + A + AMP + diphosphate + H(+). Its pathway is tRNA modification. Its function is as follows. Catalyzes the ATP-dependent 2-thiolation of cytidine in position 32 of tRNA, to form 2-thiocytidine (s(2)C32). The sulfur atoms are provided by the cysteine/cysteine desulfurase (IscS) system. The chain is tRNA-cytidine(32) 2-sulfurtransferase from Sinorhizobium medicae (strain WSM419) (Ensifer medicae).